The chain runs to 864 residues: DNA mismatch repair protein MutS (864 aa).

Position 607-614 (607-614 (GPNMGGKS)) interacts with ATP.

This sequence belongs to the DNA mismatch repair MutS family.

Functionally, this protein is involved in the repair of mismatches in DNA. It is possible that it carries out the mismatch recognition step. This protein has a weak ATPase activity. In Neisseria meningitidis serogroup A / serotype 4A (strain DSM 15465 / Z2491), this protein is DNA mismatch repair protein MutS.